A 451-amino-acid chain; its full sequence is Chromosomal replication initiator protein DnaA (451 aa).

The segment at 1–93 is domain I, interacts with DnaA modulators; that stretch reads MENIDDLWNK…HNQEEEALPE (93 aa). The disordered stretch occupies residues 88–108; that stretch reads EEALPEQTPQTPPEKDVAGQS. Residues 94-113 form a domain II region; it reads QTPQTPPEKDVAGQSTLSQT. The segment at 114-330 is domain III, AAA+ region; that stretch reads MLNDKYTFNT…GALIRVVAYS (217 aa). The ATP site is built by Gly-158, Gly-160, Lys-161, and Thr-162. The segment at 331 to 451 is domain IV, binds dsDNA; sequence SLINQDMNAD…VQAITEQLRQ (121 aa).

This sequence belongs to the DnaA family. As to quaternary structure, oligomerizes as a right-handed, spiral filament on DNA at oriC.

It is found in the cytoplasm. Its function is as follows. Plays an essential role in the initiation and regulation of chromosomal replication. ATP-DnaA binds to the origin of replication (oriC) to initiate formation of the DNA replication initiation complex once per cell cycle. Binds the DnaA box (a 9 base pair repeat at the origin) and separates the double-stranded (ds)DNA. Forms a right-handed helical filament on oriC DNA; dsDNA binds to the exterior of the filament while single-stranded (ss)DNA is stabiized in the filament's interior. The ATP-DnaA-oriC complex binds and stabilizes one strand of the AT-rich DNA unwinding element (DUE), permitting loading of DNA polymerase. After initiation quickly degrades to an ADP-DnaA complex that is not apt for DNA replication. Binds acidic phospholipids. This chain is Chromosomal replication initiator protein DnaA, found in Shouchella clausii (strain KSM-K16) (Alkalihalobacillus clausii).